The following is a 375-amino-acid chain: Protein RecA (375 aa).

Residue 75-82 (GPESSGKT) coordinates ATP. Positions 339–375 (GPYAKMKDEQTEEAAGDQMDEDKPIDLSPNFDDDDAN) are disordered. The span at 348–358 (QTEEAAGDQMD) shows a compositional bias: acidic residues.

Belongs to the RecA family.

It localises to the cytoplasm. Its function is as follows. Can catalyze the hydrolysis of ATP in the presence of single-stranded DNA, the ATP-dependent uptake of single-stranded DNA by duplex DNA, and the ATP-dependent hybridization of homologous single-stranded DNAs. It interacts with LexA causing its activation and leading to its autocatalytic cleavage. This is Protein RecA from Corynebacterium jeikeium (strain K411).